Consider the following 651-residue polypeptide: DNA ligase (651 aa).

NAD(+)-binding positions include Asp-30–Asp-34, Ser-79–Met-80, and Glu-105. Lys-107 functions as the N6-AMP-lysine intermediate in the catalytic mechanism. The NAD(+) site is built by Arg-128, Glu-162, and Lys-301. Residues Cys-395, Cys-398, Cys-411, and Cys-416 each coordinate Zn(2+). Residues Ala-570–Val-651 form the BRCT domain.

It belongs to the NAD-dependent DNA ligase family. LigA subfamily. The cofactor is Mg(2+). Mn(2+) serves as cofactor.

It catalyses the reaction NAD(+) + (deoxyribonucleotide)n-3'-hydroxyl + 5'-phospho-(deoxyribonucleotide)m = (deoxyribonucleotide)n+m + AMP + beta-nicotinamide D-nucleotide.. Its function is as follows. DNA ligase that catalyzes the formation of phosphodiester linkages between 5'-phosphoryl and 3'-hydroxyl groups in double-stranded DNA using NAD as a coenzyme and as the energy source for the reaction. It is essential for DNA replication and repair of damaged DNA. In Campylobacter lari (strain RM2100 / D67 / ATCC BAA-1060), this protein is DNA ligase.